We begin with the raw amino-acid sequence, 505 residues long: MADFVAAIDQGTTSTRCMIFDHDGAEVGRHQLEHEQILPKAGWVEHNPVEIWERTGSVLATALNATKLATTDLAALGITNQRETSLVWNRHTGRPYYNAIVWQDTRTDRIASALDRDGRGDVIRRKAGLPPATYFSGGKLQWLLENVDGLRADAANGDALFGTTDTWVLWNLTGGHRGGVHVTDVTNASRTMLMNLETLDWDDELLGFFDIPRQMLPEIRPSSSPQPYGVTVETGPADGEIPITGILGDQQAAMVGQVCLDVGEAKNTYGTGNFLLLNTGEKIVRSDNGLLTTVCYQFGDSKPVYALEGSIAVTGSAVQWLRDQLGIISGASQSESLARQVDDNGGVYFVPAFSGLFAPYWRSDARGAIVGLSRFNTNAHVARATLEAICYQSRDVVDAMAADSGVPLEVLKVDGGITANDLCMQIQADVLGVDVVKPVVAETTALGAAYAAGLAVGFWEGADDLRANWQEGRRWSPQWSDEQRAEGYAGWQKAVHRTLDWVDVE.

T12 contacts ADP. T12, T13, and S14 together coordinate ATP. T12 serves as a coordination point for sn-glycerol 3-phosphate. Position 16 (R16) interacts with ADP. Sn-glycerol 3-phosphate contacts are provided by R82, E83, Y134, and D249. Glycerol is bound by residues R82, E83, Y134, D249, and Q250. Residues T271 and G315 each coordinate ADP. ATP is bound by residues T271, G315, Q319, and G416. The ADP site is built by G416 and N420.

It belongs to the FGGY kinase family.

It catalyses the reaction glycerol + ATP = sn-glycerol 3-phosphate + ADP + H(+). Its pathway is polyol metabolism; glycerol degradation via glycerol kinase pathway; sn-glycerol 3-phosphate from glycerol: step 1/1. With respect to regulation, inhibited by fructose 1,6-bisphosphate (FBP). In terms of biological role, key enzyme in the regulation of glycerol uptake and metabolism. Catalyzes the phosphorylation of glycerol to yield sn-glycerol 3-phosphate. This Mycolicibacterium gilvum (strain PYR-GCK) (Mycobacterium gilvum (strain PYR-GCK)) protein is Glycerol kinase.